Here is a 948-residue protein sequence, read N- to C-terminus: Alanine--tRNA ligase (948 aa).

4 residues coordinate Zn(2+): histidine 638, histidine 642, cysteine 739, and histidine 743.

The protein belongs to the class-II aminoacyl-tRNA synthetase family. It depends on Zn(2+) as a cofactor.

It localises to the cytoplasm. It catalyses the reaction tRNA(Ala) + L-alanine + ATP = L-alanyl-tRNA(Ala) + AMP + diphosphate. In terms of biological role, catalyzes the attachment of alanine to tRNA(Ala) in a two-step reaction: alanine is first activated by ATP to form Ala-AMP and then transferred to the acceptor end of tRNA(Ala). Also edits incorrectly charged Ser-tRNA(Ala) and Gly-tRNA(Ala) via its editing domain. The chain is Alanine--tRNA ligase from Paracidovorax citrulli (strain AAC00-1) (Acidovorax citrulli).